The chain runs to 603 residues: Phosphomethylpyrimidine synthase (603 aa).

Residues N224, M253, Y282, H318, 338–340 (SRG), 379–382 (DGLR), and E418 each bind substrate. Zn(2+) is bound at residue H422. Y445 is a binding site for substrate. Residue H486 participates in Zn(2+) binding. [4Fe-4S] cluster contacts are provided by C566, C569, and C574.

The protein belongs to the ThiC family. In terms of assembly, homodimer. [4Fe-4S] cluster is required as a cofactor.

The enzyme catalyses 5-amino-1-(5-phospho-beta-D-ribosyl)imidazole + S-adenosyl-L-methionine = 4-amino-2-methyl-5-(phosphooxymethyl)pyrimidine + CO + 5'-deoxyadenosine + formate + L-methionine + 3 H(+). It participates in cofactor biosynthesis; thiamine diphosphate biosynthesis. Its function is as follows. Catalyzes the synthesis of the hydroxymethylpyrimidine phosphate (HMP-P) moiety of thiamine from aminoimidazole ribotide (AIR) in a radical S-adenosyl-L-methionine (SAM)-dependent reaction. This is Phosphomethylpyrimidine synthase from Xylella fastidiosa (strain Temecula1 / ATCC 700964).